A 438-amino-acid polypeptide reads, in one-letter code: Tol-Pal system protein TolB (438 aa).

Positions 1–36 (MTPAFRRADLTGFLRTYGAALILLLAAMLAWQPAQA) are cleaved as a signal peptide.

It belongs to the TolB family. In terms of assembly, the Tol-Pal system is composed of five core proteins: the inner membrane proteins TolA, TolQ and TolR, the periplasmic protein TolB and the outer membrane protein Pal. They form a network linking the inner and outer membranes and the peptidoglycan layer.

It localises to the periplasm. In terms of biological role, part of the Tol-Pal system, which plays a role in outer membrane invagination during cell division and is important for maintaining outer membrane integrity. In Bordetella pertussis (strain Tohama I / ATCC BAA-589 / NCTC 13251), this protein is Tol-Pal system protein TolB.